Here is a 120-residue protein sequence, read N- to C-terminus: Large ribosomal subunit protein uL18 (120 aa).

The protein belongs to the universal ribosomal protein uL18 family. Part of the 50S ribosomal subunit; part of the 5S rRNA/L5/L18/L25 subcomplex. Contacts the 5S and 23S rRNAs.

In terms of biological role, this is one of the proteins that bind and probably mediate the attachment of the 5S RNA into the large ribosomal subunit, where it forms part of the central protuberance. The chain is Large ribosomal subunit protein uL18 from Methylorubrum populi (strain ATCC BAA-705 / NCIMB 13946 / BJ001) (Methylobacterium populi).